A 384-amino-acid chain; its full sequence is Alcohol dehydrogenase class-3 (384 aa).

Positions 48, 70, 100, 103, 106, 114, and 177 each coordinate Zn(2+).

Belongs to the zinc-containing alcohol dehydrogenase family. Class-III subfamily. In terms of assembly, homodimer. Zn(2+) serves as cofactor.

Its subcellular location is the cytoplasm. The enzyme catalyses a primary alcohol + NAD(+) = an aldehyde + NADH + H(+). It catalyses the reaction a secondary alcohol + NAD(+) = a ketone + NADH + H(+). The catalysed reaction is S-(hydroxymethyl)glutathione + NADP(+) = S-formylglutathione + NADPH + H(+). It carries out the reaction S-(hydroxymethyl)glutathione + NAD(+) = S-formylglutathione + NADH + H(+). Its function is as follows. Class-III ADH is remarkably ineffective in oxidizing ethanol, but it readily catalyzes the oxidation of long-chain primary alcohols and the oxidation of S-(hydroxymethyl) glutathione. Plays a role in the calcium flux to the cytoplasm in the ASJ sensory neurons upon removal of a nitric oxide stimulus. The protein is Alcohol dehydrogenase class-3 of Caenorhabditis elegans.